We begin with the raw amino-acid sequence, 66 residues long: Large ribosomal subunit protein bL35 (66 aa).

This sequence belongs to the bacterial ribosomal protein bL35 family.

The polypeptide is Large ribosomal subunit protein bL35 (Bradyrhizobium diazoefficiens (strain JCM 10833 / BCRC 13528 / IAM 13628 / NBRC 14792 / USDA 110)).